The following is a 251-amino-acid chain: uncharacterized protein (251 aa).

5 helical membrane-spanning segments follow: residues 22–42 (FLGV…DIVI), 86–106 (FFLS…VILA), 120–140 (LASS…AGIV), 157–177 (LGYF…IPYV), and 205–225 (IVAW…SFLA).

Its subcellular location is the cell membrane. This is an uncharacterized protein from Mycoplasma pneumoniae (strain ATCC 29342 / M129 / Subtype 1) (Mycoplasmoides pneumoniae).